Reading from the N-terminus, the 387-residue chain is Krueppel-like factor 17 (387 aa).

Disordered stretches follow at residues 28-54, 213-234, and 257-277; these read FLDMSSSPGSGGVHTSWNRGPSGIRRV, SRDPQDFAMPPAGSPSLLPLES, and RREAQNSRAQERASGRSSPVS. The segment covering 30–46 has biased composition (polar residues); it reads DMSSSPGSGGVHTSWNR. The segment covering 257–270 has biased composition (basic and acidic residues); sequence RREAQNSRAQERAS. 3 C2H2-type zinc fingers span residues 280 to 304, 310 to 334, and 340 to 362; these read YHCEYENCGKAYTKRSHLVSHQRKH, YKCTWEACTWSFFRSDELGRHTRIH, and HKCDQCGRQFMRSDHLRQHQRTH. The tract at residues 357–387 is disordered; it reads QHQRTHMRMPRSPDPQADSGRRAGPLPAPHL.

This sequence belongs to the Sp1 C2H2-type zinc-finger protein family.

It localises to the nucleus. In terms of biological role, transcription repressor that binds to the promoter of target genes and prevents their expression. Acts as a negative regulator of epithelial-mesenchymal transition and metastasis in breast cancer. Specifically binds the 5'-CACCC-3' sequence in the promoter of ID1, a key metastasis regulator in breast cancer, and repress its expression. May be a germ cell-specific transcription factor that plays important roles in spermatid differentiation and oocyte development. The chain is Krueppel-like factor 17 (KLF17) from Sus scrofa (Pig).